The sequence spans 148 residues: UPF0178 protein lpp0103 (148 aa).

Belongs to the UPF0178 family.

The protein is UPF0178 protein lpp0103 of Legionella pneumophila (strain Paris).